A 920-amino-acid polypeptide reads, in one-letter code: Glutamate receptor 2.2 (920 aa).

Residues 1–24 (MKNSKLFFRFLFLFFFFCLESSRG) form the signal peptide. At 25-580 (QDNGKTQVNI…DKFSFLKPLS (556 aa)) the chain is on the extracellular side. Residues N53, N204, N267, N331, N342, N477, and N542 are each glycosylated (N-linked (GlcNAc...) asparagine). A helical membrane pass occupies residues 581-601 (IELWLTTLVFFFLVGISVWTL). The Cytoplasmic portion of the chain corresponds to 602 to 610 (EHRVNSDFR). The chain crosses the membrane as a helical span at residues 611 to 631 (GPANYQASTIFWFAFSTMVFA). The Cytoplasmic segment spans residues 632 to 635 (PRER). Residues 636–656 (VLSFGARSLVVTWYFVLLVLT) traverse the membrane as a helical segment. At 657–830 (QSYTASLASL…VTAIQLGVGS (174 aa)) the chain is on the extracellular side. N-linked (GlcNAc...) asparagine glycosylation occurs at N702. A helical membrane pass occupies residues 831–851 (FWFLFLVVFVVCVLALGKFTF). The Cytoplasmic portion of the chain corresponds to 852–920 (CFLWKTKGKD…QVNQTDPDCL (69 aa)).

Belongs to the glutamate-gated ion channel (TC 1.A.10.1) family. As to quaternary structure, may form heteromers. Expressed predominantly in roots.

It localises to the membrane. In terms of biological role, glutamate-gated receptor that probably acts as a non-selective cation channel. May be involved in light-signal transduction and calcium homeostasis via the regulation of calcium influx into cells. This chain is Glutamate receptor 2.2 (GLR2.2), found in Arabidopsis thaliana (Mouse-ear cress).